A 142-amino-acid polypeptide reads, in one-letter code: Nucleoside diphosphate kinase (142 aa).

Residues lysine 11, phenylalanine 59, arginine 87, threonine 93, arginine 104, and asparagine 114 each contribute to the ATP site. The active-site Pros-phosphohistidine intermediate is the histidine 117.

Belongs to the NDK family. Homotetramer. Mg(2+) is required as a cofactor.

It is found in the cytoplasm. The catalysed reaction is a 2'-deoxyribonucleoside 5'-diphosphate + ATP = a 2'-deoxyribonucleoside 5'-triphosphate + ADP. The enzyme catalyses a ribonucleoside 5'-diphosphate + ATP = a ribonucleoside 5'-triphosphate + ADP. Its function is as follows. Major role in the synthesis of nucleoside triphosphates other than ATP. The ATP gamma phosphate is transferred to the NDP beta phosphate via a ping-pong mechanism, using a phosphorylated active-site intermediate. This is Nucleoside diphosphate kinase from Dechloromonas aromatica (strain RCB).